Consider the following 467-residue polypeptide: Replication factor C large subunit (467 aa).

47–54 is an ATP binding site; it reads GPPGVGKT.

This sequence belongs to the activator 1 small subunits family. RfcL subfamily. Heteromultimer composed of small subunits (RfcS) and large subunits (RfcL).

Its function is as follows. Part of the RFC clamp loader complex which loads the PCNA sliding clamp onto DNA. The chain is Replication factor C large subunit from Methanothrix thermoacetophila (strain DSM 6194 / JCM 14653 / NBRC 101360 / PT) (Methanosaeta thermophila).